A 671-amino-acid polypeptide reads, in one-letter code: Synaptotagmin-like protein 4 (671 aa).

Residues 4 to 122 (LLDLSFLSEE…KATGDWFYDQ (119 aa)) enclose the RabBD domain. An FYVE-type zinc finger spans residues 63–105 (CARCQESLGRLSPKTNTCRGCNHLVCRDCRIQESNGTWRCKVC). The tract at residues 199–243 (SESLDSFTADSDSTSRRDSLDKSGLFPEWKKMSAPKSQVEKETQP) is disordered. 6 positions are modified to phosphoserine: S201, S204, S217, S221, S274, and S289. One can recognise a C2 1 domain in the interval 356 to 478 (VTGRIAFSLK…KLDKKLDHCL (123 aa)). Residue S488 is modified to Phosphoserine. The region spanning 507 to 633 (PASKTPVGGD…ISNGEVVDWM (127 aa)) is the C2 2 domain.

In terms of assembly, part of a ternary complex containing STX1A and RAB27A. Can bind both dominant negative and dominant active mutants of RAB27A. Binds STXBP1, RAB3A, RAB8A and RAB27B. Interacts with MYO5A.

It is found in the membrane. The protein localises to the cell membrane. It localises to the cytoplasmic vesicle. The protein resides in the secretory vesicle membrane. Modulates exocytosis of dense-core granules and secretion of hormones in the pancreas and the pituitary. Interacts with vesicles containing negatively charged phospholipids in a Ca(2+)-independent manner. This Homo sapiens (Human) protein is Synaptotagmin-like protein 4 (SYTL4).